The primary structure comprises 375 residues: Growth/differentiation factor 8 (375 aa).

Positions 1–18 (MQKLQISVYIYLFMLIVA) are cleaved as a signal peptide. Residues 19–266 (GPVDLNENSE…VTDTPKRSRR (248 aa)) constitute a propeptide that is removed on maturation. A glycan (N-linked (GlcNAc...) asparagine) is linked at Asn71. Disulfide bonds link Cys272-Cys282, Cys281-Cys340, Cys309-Cys372, and Cys313-Cys374.

It belongs to the TGF-beta family. As to quaternary structure, homodimer; disulfide-linked. Interacts with WFIKKN2, leading to inhibit its activity. Interacts with FSTL3. Synthesized as large precursor molecule that undergoes proteolytic cleavage to generate an N-terminal propeptide and a disulfide linked C-terminal dimer, which is the biologically active molecule. The circulating form consists of a latent complex of the C-terminal dimer and other proteins, including its propeptide, which maintain the C-terminal dimer in a latent, inactive state. Ligand activation requires additional cleavage of the prodomain by a tolloid-like metalloproteinase.

The protein localises to the secreted. Its function is as follows. Acts specifically as a negative regulator of skeletal muscle growth. The chain is Growth/differentiation factor 8 (MSTN) from Lepus capensis (Brown hare).